We begin with the raw amino-acid sequence, 445 residues long: Phosphoglucosamine mutase (445 aa).

S102 acts as the Phosphoserine intermediate in catalysis. Positions 102, 241, 243, and 245 each coordinate Mg(2+). The residue at position 102 (S102) is a Phosphoserine.

It belongs to the phosphohexose mutase family. Mg(2+) is required as a cofactor. Post-translationally, activated by phosphorylation.

It carries out the reaction alpha-D-glucosamine 1-phosphate = D-glucosamine 6-phosphate. Its function is as follows. Catalyzes the conversion of glucosamine-6-phosphate to glucosamine-1-phosphate. This is Phosphoglucosamine mutase from Aliivibrio fischeri (strain ATCC 700601 / ES114) (Vibrio fischeri).